The primary structure comprises 516 residues: 2-isopropylmalate synthase (516 aa).

The Pyruvate carboxyltransferase domain occupies 5–267; the sequence is VIIFDTTLRD…TTGIKHDEIS (263 aa). Residues aspartate 14, histidine 202, histidine 204, and asparagine 238 each contribute to the Mn(2+) site. Residues 392-516 form a regulatory domain region; it reads KLNYLSVQSG…IKQKKSVATV (125 aa).

The protein belongs to the alpha-IPM synthase/homocitrate synthase family. LeuA type 1 subfamily. As to quaternary structure, homodimer. Requires Mn(2+) as cofactor.

It is found in the cytoplasm. It catalyses the reaction 3-methyl-2-oxobutanoate + acetyl-CoA + H2O = (2S)-2-isopropylmalate + CoA + H(+). It participates in amino-acid biosynthesis; L-leucine biosynthesis; L-leucine from 3-methyl-2-oxobutanoate: step 1/4. Functionally, catalyzes the condensation of the acetyl group of acetyl-CoA with 3-methyl-2-oxobutanoate (2-ketoisovalerate) to form 3-carboxy-3-hydroxy-4-methylpentanoate (2-isopropylmalate). This is 2-isopropylmalate synthase from Vibrio cholerae serotype O1 (strain ATCC 39315 / El Tor Inaba N16961).